The chain runs to 31 residues: Unknown protein from spot 104 of 2D-PAGE of thylakoid (31 aa).

The protein localises to the plastid. It localises to the chloroplast thylakoid. This chain is Unknown protein from spot 104 of 2D-PAGE of thylakoid, found in Pisum sativum (Garden pea).